Reading from the N-terminus, the 138-residue chain is ATP synthase epsilon chain (138 aa).

Belongs to the ATPase epsilon chain family. In terms of assembly, F-type ATPases have 2 components, CF(1) - the catalytic core - and CF(0) - the membrane proton channel. CF(1) has five subunits: alpha(3), beta(3), gamma(1), delta(1), epsilon(1). CF(0) has three main subunits: a, b and c.

Its subcellular location is the cell inner membrane. Produces ATP from ADP in the presence of a proton gradient across the membrane. The protein is ATP synthase epsilon chain of Wigglesworthia glossinidia brevipalpis.